Consider the following 545-residue polypeptide: Capsular polysaccharide phosphotransferase SacB (545 aa).

This sequence belongs to the stealth family.

Its function is as follows. Part of a capsular biosynthesis operon and has been suggested to be the polymerase that links individual UDP-N-acetyl-D-mannosamine monomers. In serotype A the capsule is composed of repeated units of (alpha 1-6)-linked N-acetyl-D-mannosamine-1-phosphate. Non-polar disruption of this open reading frame prevented capsule synthesis. In Neisseria meningitidis serogroup A, this protein is Capsular polysaccharide phosphotransferase SacB (sacB).